A 128-amino-acid chain; its full sequence is Regulator of ribonuclease activity B (128 aa).

The protein belongs to the RraB family. Interacts with the C-terminal region of Rne.

Its subcellular location is the cytoplasm. Its function is as follows. Globally modulates RNA abundance by binding to RNase E (Rne) and regulating its endonucleolytic activity. Can modulate Rne action in a substrate-dependent manner by altering the composition of the degradosome. In Idiomarina loihiensis (strain ATCC BAA-735 / DSM 15497 / L2-TR), this protein is Regulator of ribonuclease activity B.